The chain runs to 2531 residues: Neurogenic locus notch homolog protein 1 (2531 aa).

An N-terminal signal peptide occupies residues 1-18 (MPRLLTPLLCLTLLPALA). Over 19–1725 (ARGLRCSQPS…VEPPLPSQLH (1707 aa)) the chain is Extracellular. EGF-like domains are found at residues 20–58 (RGLR…QRCQ), 59–99 (DSNP…PLCL), 102–139 (LDNA…KSCQ), and 140–176 (QADP…PTCR). Disulfide bonds link Cys24–Cys37, Cys31–Cys46, Cys63–Cys74, Cys68–Cys87, Cys89–Cys98, Cys106–Cys117, Cys111–Cys127, Cys129–Cys138, Cys144–Cys155, Cys149–Cys164, Cys166–Cys175, Cys182–Cys195, Cys189–Cys204, Cys206–Cys215, Cys222–Cys233, Cys227–Cys243, Cys245–Cys254, Cys261–Cys272, Cys266–Cys281, Cys283–Cys292, Cys299–Cys312, Cys306–Cys321, Cys323–Cys332, Cys339–Cys350, Cys344–Cys359, Cys361–Cys370, Cys376–Cys387, Cys381–Cys398, Cys400–Cys409, Cys416–Cys429, Cys423–Cys438, and Cys440–Cys449. Ser65 carries an O-linked (Glc...) serine glycan. Thr73 carries O-linked (Fuc...) threonine glycosylation. Thr116 carries an O-linked (Fuc...) threonine glycan. Residue Ser146 is glycosylated (O-linked (Glc...) serine). Positions 178–216 (DVNECSQNPGLCRHGGTCHNEIGSYRCACRATHTGPHCE) constitute an EGF-like 5; calcium-binding domain. Thr194 is a glycosylation site (O-linked (Fuc...) threonine). An EGF-like 6 domain is found at 218–255 (PYVPCSPSPCQNGGTCRPTGDTTHECACLPGFAGQNCE). A glycan (O-linked (Fuc...) threonine; alternate) is linked at Thr232. A glycan (O-linked (GalNAc...) threonine; alternate) is linked at Thr232. The EGF-like 7; calcium-binding domain occupies 257 to 293 (NVDDCPGNNCKNGGACVDGVNTYNCRCPPEWTGQYCT). Residues 295-333 (DVDECQLMPNACQNGGTCHNTHGGYNCVCVNGWTGEDCS) enclose the EGF-like 8; calcium-binding domain. Thr311 carries O-linked (Fuc...) threonine glycosylation. The region spanning 335 to 371 (NIDDCASAACFQGATCHDRVASFYCECPHGRTGLLCH) is the EGF-like 9; calcium-binding domain. A glycan (O-linked (Glc...) serine) is linked at Ser341. Residue Thr349 is glycosylated (O-linked (Fuc...) threonine). The EGF-like 10; calcium-binding domain occupies 372–410 (LNDACISNPCNEGSNCDTNPVNGKAICTCPSGYTGPACS). A glycan (O-linked (Glc...) serine) is linked at Ser378. Residues 412 to 450 (DVDECALGANPCEHAGKCLNTLGSFECQCLQGYTGPRCE) form the EGF-like 11; calcium-binding domain. The tract at residues 420-421 (AN) is interaction with DLL4. Residues Thr432 and Ser435 each contribute to the Ca(2+) site. Ser435 is a glycosylation site (O-linked (Glc...) serine). The interaction with DLL4 stretch occupies residues 448–452 (RCEID). Ca(2+) is bound by residues Asp452, Val453, and Glu455. Positions 452–488 (DVNECISNPCQNDATCLDQIGEFQCICMPGYEGVYCE) constitute an EGF-like 12; calcium-binding domain. 3 disulfides stabilise this stretch: Cys456-Cys467, Cys461-Cys476, and Cys478-Cys487. Residue Ser458 is glycosylated (O-linked (Glc...) serine). Residue Thr466 is glycosylated (O-linked (Fuc...) threonine). Residues Asp469 and Gln470 each contribute to the Ca(2+) site. 3 residues coordinate Ca(2+): Asn490, Thr491, and Glu493. In terms of domain architecture, EGF-like 13; calcium-binding spans 490–526 (NTDECASSPCLHNGHCMDKINEFQCQCPKGFNGHLCQ). 75 cysteine pairs are disulfide-bonded: Cys494/Cys505, Cys499/Cys514, Cys516/Cys525, Cys532/Cys543, Cys537/Cys552, Cys554/Cys563, Cys570/Cys580, Cys575/Cys589, Cys591/Cys600, Cys607/Cys618, Cys612/Cys627, Cys629/Cys638, Cys645/Cys655, Cys650/Cys664, Cys666/Cys675, Cys682/Cys693, Cys687/Cys702, Cys704/Cys713, Cys720/Cys730, Cys725/Cys739, Cys741/Cys750, Cys757/Cys768, Cys762/Cys777, Cys779/Cys788, Cys795/Cys806, Cys800/Cys815, Cys817/Cys826, Cys833/Cys844, Cys838/Cys855, Cys857/Cys866, Cys873/Cys884, Cys878/Cys893, Cys895/Cys904, Cys911/Cys922, Cys916/Cys931, Cys933/Cys942, Cys949/Cys960, Cys954/Cys969, Cys971/Cys980, Cys987/Cys998, Cys992/Cys1007, Cys1009/Cys1018, Cys1025/Cys1036, Cys1030/Cys1045, Cys1047/Cys1056, Cys1063/Cys1074, Cys1068/Cys1083, Cys1085/Cys1094, Cys1101/Cys1122, Cys1116/Cys1131, Cys1133/Cys1142, Cys1149/Cys1160, Cys1154/Cys1169, Cys1171/Cys1180, Cys1187/Cys1198, Cys1192/Cys1207, Cys1209/Cys1218, Cys1225/Cys1244, Cys1238/Cys1253, Cys1255/Cys1264, Cys1271/Cys1284, Cys1276/Cys1293, Cys1295/Cys1304, Cys1311/Cys1322, Cys1316/Cys1334, Cys1336/Cys1345, Cys1352/Cys1363, Cys1357/Cys1372, Cys1374/Cys1383, Cys1391/Cys1403, Cys1397/Cys1414, Cys1416/Cys1425, Cys1449/Cys1472, Cys1454/Cys1467, and Cys1463/Cys1479. Ser496 is a glycosylation site (O-linked (Glc...) serine). 2 residues coordinate Ca(2+): Asp507 and Lys508. The EGF-like 14; calcium-binding domain occupies 528-564 (DVDECASTPCKNGAKCLDGPNTYTCVCTEGYTGTHCE). Ser534 carries O-linked (Glc...) serine glycosylation. The region spanning 566-601 (DIDECDPDPCHYGSCKDGVATFTCLCQPGYTGHHCE) is the EGF-like 15; calcium-binding domain. The 37-residue stretch at 603 to 639 (NINECHSQPCRHGGTCQDRDNSYLCLCLKGTTGPNCE) folds into the EGF-like 16; calcium-binding domain. Ser609 is a glycosylation site (O-linked (Glc...) serine). The O-linked (Fuc...) threonine glycan is linked to Thr617. An EGF-like 17; calcium-binding domain is found at 641–676 (NLDDCASNPCDSGTCLDKIDGYECACEPGYTGSMCN). Ser647 is a glycosylation site (O-linked (Glc...) serine). An EGF-like 18; calcium-binding domain is found at 678–714 (NIDECAGSPCHNGGTCEDGIAGFTCRCPEGYHDPTCL). O-linked (Fuc...) threonine glycosylation occurs at Thr692. One can recognise an EGF-like 19; calcium-binding domain in the interval 716-751 (EVNECNSNPCIHGACRDGLNGYKCDCAPGWSGTNCD). O-linked (Glc...) serine glycosylation occurs at Ser722. In terms of domain architecture, EGF-like 20; calcium-binding spans 753–789 (NNNECESNPCVNGGTCKDMTSGYVCTCREGFSGPNCQ). Residue Ser759 is glycosylated (O-linked (Glc...) serine). O-linked (Fuc...) threonine glycosylation is present at Thr767. O-linked (GlcNAc) serine glycosylation occurs at Ser784. An EGF-like 21; calcium-binding domain is found at 791–827 (NINECASNPCLNQGTCIDDVAGYKCNCPLPYTGATCE). The O-linked (Glc...) serine glycan is linked to Ser797. Thr805 carries O-linked (Fuc...) threonine glycosylation. Positions 829–867 (VLAPCATSPCKNSGVCKESEDYESFSCVCPTGWQGQTCE) constitute an EGF-like 22 domain. In terms of domain architecture, EGF-like 23; calcium-binding spans 869 to 905 (DINECVKSPCRHGASCQNTNGSYRCLCQAGYTGRNCE). The N-linked (GlcNAc...) asparagine glycan is linked to Asn888. Thr900 carries an O-linked (GlcNAc) threonine glycan. In terms of domain architecture, EGF-like 24 spans 907–943 (DIDDCRPNPCHNGGSCTDGINTAFCDCLPGFQGAFCE). Ser921 carries an O-linked (Fuc) serine glycan. The region spanning 945-981 (DINECASNPCQNGANCTDCVDSYTCTCPVGFNGIHCE) is the EGF-like 25; calcium-binding domain. O-linked (Glc...) serine glycosylation occurs at Ser951. A glycan (N-linked (GlcNAc...) asparagine) is linked at Asn959. The EGF-like 26 domain maps to 983–1019 (NTPDCTESSCFNGGTCVDGINSFTCLCPPGFTGSYCQ). Thr997 is a glycosylation site (O-linked (Fuc...) threonine). The region spanning 1021–1057 (DVNECDSRPCLHGGTCQDSYGTYKCTCPQGYTGLNCQ) is the EGF-like 27; calcium-binding domain. Ser1027 is a glycosylation site (O-linked (Glc...) serine). A glycan (O-linked (Fuc...) threonine) is linked at Thr1035. EGF-like domains are found at residues 1059–1095 (LVRW…VNCD) and 1097–1143 (LSVS…SYCE). An O-linked (Glc...) serine glycan is attached at Ser1065. The region spanning 1145-1181 (EVDECSPNPCQNGATCTDYLGGFSCKCVAGYHGSNCS) is the EGF-like 30; calcium-binding domain. Thr1159 carries O-linked (Fuc...) threonine glycosylation. Asn1179 carries an N-linked (GlcNAc...) asparagine glycan. Residues 1183–1219 (EINECLSQPCQNGGTCIDLTNSYKCSCPRGTQGVHCE) form the EGF-like 31; calcium-binding domain. A glycan (O-linked (Glc...) serine) is linked at Ser1189. The O-linked (Fuc...) threonine glycan is linked to Thr1197. The EGF-like 32; calcium-binding domain occupies 1221–1265 (NVDDCHPPLDPASRSPKCFNNGTCVDQVGGYTCTCPPGFVGERCE). A glycan (N-linked (GlcNAc...) asparagine) is linked at Asn1241. EGF-like domains are found at residues 1267 to 1305 (DVNE…RRCE), 1307 to 1346 (VING…ATCE), 1348 to 1384 (DART…PECQ), and 1387 to 1426 (ASSP…LLCH). Ser1273 carries an O-linked (Glc...) serine glycan. Thr1362 carries an O-linked (Fuc...) threonine glycan. Thr1379 carries O-linked (GlcNAc...) threonine glycosylation. An O-linked (Fuc...) threonine; alternate glycan is attached at Thr1402. An O-linked (GalNAc...) threonine; alternate glycan is attached at Thr1402. LNR repeat units lie at residues 1449–1489 (CELP…PWKN), 1490–1531 (CTQS…CNPL), and 1532–1571 (YDQY…RLAA). Ca(2+) contacts are provided by Asp1457, Asn1460, Asp1475, and Asp1478. The N-linked (GlcNAc...) asparagine glycan is linked to Asn1489. 5 disulfides stabilise this stretch: Cys1490–Cys1514, Cys1496–Cys1509, Cys1505–Cys1521, Cys1536–Cys1549, and Cys1545–Cys1561. Residue Asn1587 is glycosylated (N-linked (GlcNAc...) asparagine). Positions 1718–1750 (PPLPSQLHLMYVAAAAFVLLFFVGCGVLLSRKR) are interaction with PSEN1. The helical transmembrane segment at 1726–1746 (LMYVAAAAFVLLFFVGCGVLL) threads the bilayer. Residues 1747–2531 (SRKRRRQHGQ…QITHIPEAFK (785 aa)) are Cytoplasmic-facing. Lys1749 participates in a covalent cross-link: Glycyl lysine isopeptide (Lys-Gly) (interchain with G-Cter in ubiquitin). The tract at residues 1770-1798 (KKKRREPLGEDSVGLKPLKNASDGALMDD) is disordered. Residue Thr1851 is modified to Phosphothreonine. ANK repeat units follow at residues 1917–1946 (TGET…DANI), 1950–1980 (MGRT…DLDA), 1984–2013 (DGTT…DVNA), 2017–2046 (LGKS…NKDM), and 2050–2079 (KEET…NRDI). The tract at residues 1937–1945 (LLEASADAN) is HIF1AN-binding. Position 1945 is a (3S)-3-hydroxyasparagine; by HIF1AN; partial (Asn1945). The interval 2004–2012 (LINSHADVN) is HIF1AN-binding. A (3S)-3-hydroxyasparagine; by HIF1AN; partial modification is found at Asn2012. 3 disordered regions span residues 2140–2185 (KSAT…DSSS), 2382–2428 (QPQN…SLPV), and 2440–2531 (PTSL…EAFK). A compositionally biased stretch (low complexity) spans 2382–2395 (QPQNLQPPSQPHLS). Residues 2440 to 2478 (PTSLPSSMVPPMTTTQFLTPPSQHSYSSSPVDNTPSHQL) show a composition bias toward polar residues. Positions 2488-2503 (PSPESPDQWSSSSPHS) are enriched in low complexity. Positions 2504–2524 (NISDWSEGISSPPTTMPSQIT) are enriched in polar residues.

This sequence belongs to the NOTCH family. Heterodimer of a C-terminal fragment N(TM) and an N-terminal fragment N(EC) which are probably linked by disulfide bonds. Interacts with DNER, DTX1, DTX2 and RBPJ/RBPSUH. Also interacts with MAML1, MAML2 and MAML3 which act as transcriptional coactivators for NOTCH1. Notch 1 intracellular domain interacts with SNW1; the interaction involves multimerized NOTCH1 NICD and is implicated in a formation of an intermediate preactivation complex which associates with DNA-bound CBF-1/RBPJ. The activated membrane-bound form interacts with AAK1 which promotes NOTCH1 stabilization. Forms a trimeric complex with FBXW7 and SGK1. Interacts with HIF1AN. HIF1AN negatively regulates the function of notch intracellular domain (NICD), accelerating myogenic differentiation. Interacts (via NICD) with SNAI1 (via zinc fingers); the interaction induces SNAI1 degradation via MDM2-mediated ubiquitination and inhibits SNAI1-induced cell invasion. Interacts (via NICD) with MDM2A. Interacts (via NICD) with BCL6; the interaction decreases MAML1 recruitment by NOTCH1 NICD on target genes DNA and inhibits NOTCH1 transactivation activity. Interacts with THBS4. Interacts (via the EGF-like repeat region) with CCN3 (via CTCK domain). Interacts (via EGF-like domains) with DLL4 (via N-terminal DSL and MNNL domains). Interacts with ZMIZ1. Interacts (via NICD domain) with MEGF10 (via the cytoplasmic domain). Interacts with DLL1 and JAG1. Interacts (via NICD domain) with PRAG1. Forms a complex with PRAG1, N1ICD and MAML1, in a MAML1-dependent manner. Interacts (via transmembrane region) with PSEN1; the interaction is direct. Interacts with ZFP64. In terms of processing, synthesized in the endoplasmic reticulum as an inactive form which is proteolytically cleaved by a furin-like convertase in the trans-Golgi network before it reaches the plasma membrane to yield an active, ligand-accessible form. Cleavage results in a C-terminal fragment N(TM) and a N-terminal fragment N(EC). Following ligand binding, it is cleaved by ADAM17 to yield a membrane-associated intermediate fragment called notch extracellular truncation (NEXT). Following endocytosis, this fragment is then cleaved by one of the catalytic subunits of gamma-secretase (PSEN1 or PSEN2) to release a Notch-derived peptide containing the intracellular domain (NICD) from the membrane. Phosphorylated. Post-translationally, O-linked glycosylation by GALNT11 is involved in determination of left/right symmetry: glycosylation promotes activation of NOTCH1, possibly by promoting cleavage by ADAM17, modulating the balance between motile and immotile (sensory) cilia at the left-right organiser (LRO). O-glycosylated on the EGF-like domains. O-glucosylated at Ser-435 by KDELC1 and KDELC2. Contains both O-linked fucose and O-linked glucose in the EGF-like domains 11, 12 and 13, which are interacting with the residues on DLL4. O-glycosylation at Ser-1027 is only partial. MFNG-, RFNG- and LFNG-mediated modification of O-fucose residues at specific EGF-like domains results in inhibition of its activation by JAG1 and enhancement of its activation by DLL1 via an increased binding to DLL1. In terms of processing, ubiquitinated. Undergoes 'Lys-29'-linked polyubiquitination by ITCH; promotes the lysosomal degradation of non-activated internalized NOTCH1. Deubiquitination by USP12 is required for transport of internalized non-activated receptor from late endosomes to lysosomes for degradation. Monoubiquitination at Lys-1749 is required for activation by gamma-secretase cleavage, it promotes interaction with AAK1, which stabilizes it. Deubiquitination by EIF3F is necessary for nuclear import of activated Notch. Hydroxylated at Asn-1945 and Asn-2012 by HIF1AN. Hydroxylation reduces affinity for HI1AN and may thus indirectly modulate negative regulation of NICD. In terms of tissue distribution, highly expressed in the brain, lung and thymus. Expressed at lower levels in the spleen, bone-marrow, spinal cord, eyes, mammary gland, liver, intestine, skeletal muscle, kidney and heart. In the hair follicle, highly expressed exclusively in the epithelial compartment.

The protein resides in the cell membrane. It is found in the late endosome membrane. Its subcellular location is the nucleus. In terms of biological role, functions as a receptor for membrane-bound ligands Jagged-1 (JAG1), Jagged-2 (JAG2) and Delta-1 (DLL1) to regulate cell-fate determination. Upon ligand activation through the released notch intracellular domain (NICD) it forms a transcriptional activator complex with RBPJ/RBPSUH and activates genes of the enhancer of split locus. Affects the implementation of differentiation, proliferation and apoptotic programs. Involved in angiogenesis; negatively regulates endothelial cell proliferation and migration and angiogenic sprouting. Involved in the maturation of both CD4(+) and CD8(+) cells in the thymus. Important for follicular differentiation and possibly cell fate selection within the follicle. During cerebellar development, functions as a receptor for neuronal DNER and is involved in the differentiation of Bergmann glia. Represses neuronal and myogenic differentiation. May play an essential role in postimplantation development, probably in some aspect of cell specification and/or differentiation. May be involved in mesoderm development, somite formation and neurogenesis. May enhance HIF1A function by sequestering HIF1AN away from HIF1A. Required for the THBS4 function in regulating protective astrogenesis from the subventricular zone (SVZ) niche after injury. Involved in determination of left/right symmetry by modulating the balance between motile and immotile (sensory) cilia at the left-right organiser (LRO). The polypeptide is Neurogenic locus notch homolog protein 1 (Notch1) (Mus musculus (Mouse)).